Here is a 68-residue protein sequence, read N- to C-terminus: U-scoloptoxin(02)-Er1a (68 aa).

The first 20 residues, methionine 1–threonine 20, serve as a signal peptide directing secretion. Intrachain disulfides connect cysteine 30–cysteine 52, cysteine 38–cysteine 58, and cysteine 42–cysteine 60.

This sequence belongs to the invertebrate defensin family. Expressed by the venom gland.

The protein resides in the secreted. Functionally, antibacterial peptide mostly active against Gram-positive bacteria. The chain is U-scoloptoxin(02)-Er1a from Ethmostigmus rubripes (Giant centipede).